Consider the following 338-residue polypeptide: MERAITPEKRDDDLQFDATLRPRTLQDYIGQEKIRENLKLFIDAAKGRSEALDHVLLYGPPGLGKTTLANIIACEMGVNIKSTSGPVIERPGDLAAILTNLEPHDVLFIDEIHRLSHVVEEILYPAMEDFQLDIIIGQGPSARSIKLDLPRFTLVGATTRAGLLSSPLRDRFGVISRLEFYTHDELAFIVTRSARILGMAIDREGALELARRSRGTPRIANRLLRRVRDYAQVRADGAITLSVVQETLRLLEIDEMGFDQMDRMILLTIIDKFGGGPVGLDTIGAAIGEESDTIEDVYEPFLIQNGFLNRTPRGRVATPAAYQHFGRLTPERPQGSLF.

The large ATPase domain (RuvB-L) stretch occupies residues 1–181; that stretch reads MERAITPEKR…FGVISRLEFY (181 aa). Residues Leu-20, Arg-21, Gly-62, Lys-65, Thr-66, Thr-67, 128–130, Arg-171, Tyr-181, and Arg-218 contribute to the ATP site; that span reads EDF. Thr-66 is a Mg(2+) binding site. A small ATPAse domain (RuvB-S) region spans residues 182–252; the sequence is THDELAFIVT…VVQETLRLLE (71 aa). A head domain (RuvB-H) region spans residues 255–338; it reads EMGFDQMDRM…TPERPQGSLF (84 aa). Residues Arg-310 and Arg-315 each coordinate DNA.

Belongs to the RuvB family. As to quaternary structure, homohexamer. Forms an RuvA(8)-RuvB(12)-Holliday junction (HJ) complex. HJ DNA is sandwiched between 2 RuvA tetramers; dsDNA enters through RuvA and exits via RuvB. An RuvB hexamer assembles on each DNA strand where it exits the tetramer. Each RuvB hexamer is contacted by two RuvA subunits (via domain III) on 2 adjacent RuvB subunits; this complex drives branch migration. In the full resolvosome a probable DNA-RuvA(4)-RuvB(12)-RuvC(2) complex forms which resolves the HJ.

The protein localises to the cytoplasm. The catalysed reaction is ATP + H2O = ADP + phosphate + H(+). In terms of biological role, the RuvA-RuvB-RuvC complex processes Holliday junction (HJ) DNA during genetic recombination and DNA repair, while the RuvA-RuvB complex plays an important role in the rescue of blocked DNA replication forks via replication fork reversal (RFR). RuvA specifically binds to HJ cruciform DNA, conferring on it an open structure. The RuvB hexamer acts as an ATP-dependent pump, pulling dsDNA into and through the RuvAB complex. RuvB forms 2 homohexamers on either side of HJ DNA bound by 1 or 2 RuvA tetramers; 4 subunits per hexamer contact DNA at a time. Coordinated motions by a converter formed by DNA-disengaged RuvB subunits stimulates ATP hydrolysis and nucleotide exchange. Immobilization of the converter enables RuvB to convert the ATP-contained energy into a lever motion, pulling 2 nucleotides of DNA out of the RuvA tetramer per ATP hydrolyzed, thus driving DNA branch migration. The RuvB motors rotate together with the DNA substrate, which together with the progressing nucleotide cycle form the mechanistic basis for DNA recombination by continuous HJ branch migration. Branch migration allows RuvC to scan DNA until it finds its consensus sequence, where it cleaves and resolves cruciform DNA. The chain is Holliday junction branch migration complex subunit RuvB from Trichlorobacter lovleyi (strain ATCC BAA-1151 / DSM 17278 / SZ) (Geobacter lovleyi).